A 90-amino-acid polypeptide reads, in one-letter code: Movement protein (90 aa).

The helical transmembrane segment at 32 to 52 threads the bilayer; it reads FVFVTFGLLIAVGVAWLAYTL.

This sequence belongs to the mastrevirus movement protein family. Interacts with the capsid protein (CP). Part of a MP-CP-viral DNA complex.

Its subcellular location is the host membrane. Involved in the viral transport within, and between cells. The sequence is that of Movement protein from Wheat dwarf virus (isolate Sweden) (WDV).